Here is a 297-residue protein sequence, read N- to C-terminus: 33 kDa chaperonin (297 aa).

Intrachain disulfides connect Cys232–Cys234 and Cys266–Cys269.

The protein belongs to the HSP33 family. Under oxidizing conditions two disulfide bonds are formed involving the reactive cysteines. Under reducing conditions zinc is bound to the reactive cysteines and the protein is inactive.

The protein localises to the cytoplasm. In terms of biological role, redox regulated molecular chaperone. Protects both thermally unfolding and oxidatively damaged proteins from irreversible aggregation. Plays an important role in the bacterial defense system toward oxidative stress. The protein is 33 kDa chaperonin of Azotobacter vinelandii (strain DJ / ATCC BAA-1303).